The primary structure comprises 269 residues: MTGLLEGKRILVTGIITDSSIAFHIAKVAQEAGAELVLTGFDRLKLVKRIADRLPKPAPLLELDVQNEEHLSTLADRITAEIGEGNKIDGVVHSIGFMPQSGMGINPFFDAPYEDVSKGIHISAYSYASLAKAVLPIMNPGGGIVGMDFDPTRAMPAYNWMTVAKSALESVNRFVAREAGKVGVRSNLVAAGPIRTLAMSAIVGGALGDEAGQQMQLLEEGWDQRAPLGWNMKDPTPVAKTVCALLSDWLPATTGTVIYADGGASTQLL.

NAD(+) is bound by residues 20–21 (SI), 64–65 (DV), and 95–96 (IG). Residue Tyr-158 coordinates substrate. The NAD(+) site is built by Lys-165 and Ile-194. A Phosphothreonine modification is found at Thr-266.

This sequence belongs to the short-chain dehydrogenases/reductases (SDR) family. FabI subfamily. In terms of assembly, homodimer. Homotetramer. Is phosphorylated in vivo. Phosphorylation on Thr-266 decreases enzymatic activity.

It is found in the secreted. Its subcellular location is the cell wall. It carries out the reaction a 2,3-saturated acyl-[ACP] + NAD(+) = a (2E)-enoyl-[ACP] + NADH + H(+). The enzyme catalyses a 2,3-saturated acyl-CoA + NAD(+) = a (2E)-enoyl-CoA + NADH + H(+). The catalysed reaction is (2E)-octenoyl-CoA + NADH + H(+) = octanoyl-CoA + NAD(+). It catalyses the reaction (2E)-dodecenoyl-CoA + NADH + H(+) = dodecanoyl-CoA + NAD(+). It participates in lipid metabolism; mycolic acid biosynthesis. Its activity is regulated as follows. InhA activity is controlled via phosphorylation: phosphorylation on Thr-266 decreases InhA activity and likely negatively regulates biosynthesis of mycolic acids and growth of the bacterium. InhA activity is likely inhibited by activated isoniazid, hexadecynoyl-CoA and octadecynoyl-CoA, which also block the biosynthesis of mycolic acids. The antitubercular pro-drug isoniazid (INH) is oxidatively activated by the catalase-peroxidase KatG and then covalently binds NAD to form an adduct that inhibits the activity of InhA. The inhibitory adduct is the isonicotinic-acyl-NADH where the isonicotinic-acyl group replaces the 4S (and not the 4R) hydrogen of NADH. Similarly, the antitubercular pro-drugs ethionamide (ETH) and prothionamide (PTH) are activated by the flavoprotein monooxygenase EthA, and forms an adduct with NAD (ETH-NAD and PTH-NAD, respectively) that is a tight-binding inhibitor of InhA. Enoyl-ACP reductase of the type II fatty acid syntase (FAS-II) system, which is involved in the biosynthesis of mycolic acids, a major component of mycobacterial cell walls. Catalyzes the NADH-dependent reduction of the double bond of 2-trans-enoyl-[acyl-carrier protein], an essential step in the fatty acid elongation cycle of the FAS-II pathway. Shows preference for long-chain fatty acyl thioester substrates (&gt;C16), and can also use 2-trans-enoyl-CoAs as alternative substrates. The mycobacterial FAS-II system utilizes the products of the FAS-I system as primers to extend fatty acyl chain lengths up to C56, forming the meromycolate chain that serves as the precursor for final mycolic acids. Functionally, is the primary target of the first-line antitubercular drug isoniazid (INH) and of the second-line drug ethionamide (ETH). Overexpressed inhA confers INH and ETH resistance to M.smegmatis. The mechanism of isoniazid action against InhA is covalent attachment of the activated form of the drug to the nicotinamide ring of NAD and binding of the INH-NAD adduct to the active site of InhA. Similarly, the ETH-NAD adduct binds InhA. In Mycolicibacterium smegmatis (strain ATCC 700084 / mc(2)155) (Mycobacterium smegmatis), this protein is Enoyl-[acyl-carrier-protein] reductase [NADH].